The primary structure comprises 23 residues: Dahlein-4.3 (23 aa).

Expressed by the skin dorsal glands.

The protein localises to the secreted. Its function is as follows. Has no antimicrobial activity. The polypeptide is Dahlein-4.3 (Ranoidea dahlii (Dahl's aquatic frog)).